A 307-amino-acid chain; its full sequence is Fructokinase (307 aa).

It belongs to the carbohydrate kinase PfkB family.

It catalyses the reaction D-fructose + ATP = D-fructose 6-phosphate + ADP + H(+). This Escherichia coli protein is Fructokinase (cscK).